The primary structure comprises 137 residues: Fluoride-specific ion channel FluC 1 (137 aa).

4 consecutive transmembrane segments (helical) span residues 4 to 24 (LIYI…YYLG), 37 to 57 (LATL…TTYI), 67 to 87 (VITG…TFSV), and 98 to 118 (WGIA…MSGL). Na(+)-binding residues include Gly77 and Thr80.

Belongs to the fluoride channel Fluc/FEX (TC 1.A.43) family.

Its subcellular location is the cell membrane. The enzyme catalyses fluoride(in) = fluoride(out). With respect to regulation, na(+) is not transported, but it plays an essential structural role and its presence is essential for fluoride channel function. Its function is as follows. Fluoride-specific ion channel. Important for reducing fluoride concentration in the cell, thus reducing its toxicity. The chain is Fluoride-specific ion channel FluC 1 from Bacillus cereus (strain ZK / E33L).